A 407-amino-acid chain; its full sequence is Na(+)-translocating NADH-quinone reductase subunit F (407 aa).

A helical membrane pass occupies residues 6–26; that stretch reads IFLAIGMFTAIVLGLVAIILV. The 2Fe-2S ferredoxin-type domain maps to 35 to 127; the sequence is GDVTIQINGE…DMQIRVPEEV (93 aa). Residues C70, C76, C79, and C111 each coordinate [2Fe-2S] cluster. The region spanning 130-269 is the FAD-binding FR-type domain; sequence VKKWECTVES…YGPFGEFFAK (140 aa).

This sequence belongs to the NqrF family. As to quaternary structure, composed of six subunits; NqrA, NqrB, NqrC, NqrD, NqrE and NqrF. The cofactor is [2Fe-2S] cluster. Requires FAD as cofactor.

Its subcellular location is the cell inner membrane. It carries out the reaction a ubiquinone + n Na(+)(in) + NADH + H(+) = a ubiquinol + n Na(+)(out) + NAD(+). NQR complex catalyzes the reduction of ubiquinone-1 to ubiquinol by two successive reactions, coupled with the transport of Na(+) ions from the cytoplasm to the periplasm. The first step is catalyzed by NqrF, which accepts electrons from NADH and reduces ubiquinone-1 to ubisemiquinone by a one-electron transfer pathway. This is Na(+)-translocating NADH-quinone reductase subunit F from Pseudomonas paraeruginosa (strain DSM 24068 / PA7) (Pseudomonas aeruginosa (strain PA7)).